The sequence spans 29 residues: Cyclotide mela-3 (29 aa).

The cyclopeptide (Gly-Asp) cross-link spans 1–29 (GKPICGETCFKGKCYTPGCTCSYPICKKD). 3 disulfides stabilise this stretch: Cys5–Cys19, Cys9–Cys21, and Cys14–Cys26.

Post-translationally, this is a cyclic peptide. In terms of processing, contains 3 disulfide bonds.

In terms of biological role, probably participates in a plant defense mechanism (Potential). Binds to and induces leakage in phospholipd membranes, particularly ones containing 1-palmitoyl-2-oleophosphatidylethanolamine (POPE). In vitro, displays cytotoxicity against cultured cells. Not active against Gram-negative bacterium E.coli ATCC 25922 or Gram-positive bacterium S.aureus ATCC 25923 up to a concentration of 64 uM. This Melicytus latifolius (Norfolk Island mahoe) protein is Cyclotide mela-3.